A 1368-amino-acid polypeptide reads, in one-letter code: DNA-directed RNA polymerase subunit beta (1368 aa).

It belongs to the RNA polymerase beta chain family. As to quaternary structure, the RNAP catalytic core consists of 2 alpha, 1 beta, 1 beta' and 1 omega subunit. When a sigma factor is associated with the core the holoenzyme is formed, which can initiate transcription.

The catalysed reaction is RNA(n) + a ribonucleoside 5'-triphosphate = RNA(n+1) + diphosphate. DNA-dependent RNA polymerase catalyzes the transcription of DNA into RNA using the four ribonucleoside triphosphates as substrates. The sequence is that of DNA-directed RNA polymerase subunit beta from Burkholderia ambifaria (strain ATCC BAA-244 / DSM 16087 / CCUG 44356 / LMG 19182 / AMMD) (Burkholderia cepacia (strain AMMD)).